Consider the following 284-residue polypeptide: Tropomyosin (284 aa).

Positions 1-284 (MDAIKKKMLM…DQALNELHNM (284 aa)) form a coiled coil. Disordered stretches follow at residues 106-134 (LNSTVEKLTDSEKAADESERARKVLENRQ) and 186-221 (AETKARELEDELKTTTGQLKSMEAQATKASEKEEAY). 2 stretches are compositionally biased toward basic and acidic residues: residues 112 to 134 (KLTDSEKAADESERARKVLENRQ) and 186 to 198 (AETKARELEDELK).

This sequence belongs to the tropomyosin family. Homodimer.

Tropomyosin, in association with the troponin complex, plays a central role in the calcium dependent regulation of muscle contraction. The polypeptide is Tropomyosin (TPM) (Branchiostoma belcheri (Amphioxus)).